We begin with the raw amino-acid sequence, 781 residues long: Cadherin-24 (781 aa).

The signal sequence occupies residues 1–22 (MWGLVRLLLAWLGGWGCMGRLA). A propeptide spanning residues 23-44 (APVPAWAGSRGHSGPTLLRTRR) is cleaved from the precursor. At 45 to 603 (SWVWNQFFVI…LSPTGLSTGA (559 aa)) the chain is on the extracellular side. Cadherin domains are found at residues 46–150 (WVWN…PPVF), 151–259 (PLGP…PPKF), 260–374 (PQSL…PPAF), 375–479 (TQAT…APQL), and 479–592 (LAEP…WPEA). 3 N-linked (GlcNAc...) asparagine glycosylation sites follow: asparagine 446, asparagine 510, and asparagine 525. The chain crosses the membrane as a helical span at residues 604–624 (LLAIVTCMGTLLALVVLFVAL). At 625-781 (RRQKQEALMV…LYGAKEPPAP (157 aa)) the chain is on the cytoplasmic side. Disordered regions lie at residues 665-700 (LQNP…PGPA) and 731-762 (EGRG…LDDW). The span at 733–746 (RGSSCGSLSSLGSG) shows a compositional bias: low complexity.

In terms of assembly, associates with alpha-, beta- and delta-catenins.

Its subcellular location is the cell membrane. Cadherins are calcium-dependent cell adhesion proteins. They preferentially interact with themselves in a homophilic manner in connecting cells; cadherins may thus contribute to the sorting of heterogeneous cell types. Cadherin-24 mediate strong cell-cell adhesion. The chain is Cadherin-24 (Cdh24) from Mus musculus (Mouse).